The chain runs to 99 residues: NADH-quinone oxidoreductase subunit K (99 aa).

Helical transmembrane passes span Pro3–Val23, Ile28–Phe48, and Val59–Ile79.

Belongs to the complex I subunit 4L family. In terms of assembly, NDH-1 is composed of 14 different subunits. Subunits NuoA, H, J, K, L, M, N constitute the membrane sector of the complex.

Its subcellular location is the cell membrane. It carries out the reaction a quinone + NADH + 5 H(+)(in) = a quinol + NAD(+) + 4 H(+)(out). Functionally, NDH-1 shuttles electrons from NADH, via FMN and iron-sulfur (Fe-S) centers, to quinones in the respiratory chain. The immediate electron acceptor for the enzyme in this species is believed to be a menaquinone. Couples the redox reaction to proton translocation (for every two electrons transferred, four hydrogen ions are translocated across the cytoplasmic membrane), and thus conserves the redox energy in a proton gradient. The chain is NADH-quinone oxidoreductase subunit K from Frankia alni (strain DSM 45986 / CECT 9034 / ACN14a).